The primary structure comprises 147 residues: Hemoglobin subunit epsilon (147 aa).

Residues 3 to 147 (HFTAEEKSVI…VATALAHKYH (145 aa)) enclose the Globin domain. Phosphoserine is present on S51. Residues H64 and H93 each coordinate heme b.

This sequence belongs to the globin family. As to expression, red blood cells.

In terms of biological role, hemoglobin epsilon chain is a beta-type chain found in early embryos. The sequence is that of Hemoglobin subunit epsilon (HBE1) from Sus scrofa (Pig).